Reading from the N-terminus, the 807-residue chain is MTSQIQDLLATDQDLLLMQEGTMMRKVRTKSWKKLRYFRLQNDGMTVWHGSQPESMPKPTFSISDVERIRKGQDSELLRYLVEEFPLEQGFTVVFHGRRPNLDLVANSVEEAQIWMRGLQLLVDLVASMDHQEQMDQMLNEWFQQADRNQDGRMSFREAQRLLLLMNVEMDEEYAFSLFQEADVTQSDDLGSEEFVQFYKALTKRTEIEEIFEDFSSDKQKLTLLEFVDFLRKEQKEKDHAPDLALELIDRYEPSENGRLLHVLSKDGFLKYLCSKDGNIFNSDCLPIYQDMTQPLSHYYINSSHNTYLVGDQLCGQSSVEGYIRALKRGCRCVEVDTWDGPDGEPVVYHGHTLTSRILFKDVLATLAQYAFQSSDYPLILSLENHCTWEQQRTMAHHLTEILGEQLLRNTLEGLLVDSMPSPEQLRGKILVKGKKLRTIEVDKEEEEEEEEEELEKDEGPDLDPASPELDTQPQPETQGQAAGNKKERKKKVMKCPMSCLLICGHVMAQAPSSIPESILLSKQFLLLSSTTIMCPDLSALVVYLRTVPFCSFTHSKENYHIYDISSFSESKAKNLIKEAGNEFVQHNARQLCRVYPSGLRTDSSNFNPQEHWNVGCQMVAMNMQTAGSAMDICDGLFRQNGGSGYVLKPEFLRDTQSSFNPERPISLYKAQILVVQVISGQQLPKVDKTKETTVVDPLVKVELYGVPEDTKEQETSHVENNGINPYWGETFYFRLQVPELAMLRFVVKDYSRKSRNNFIGQYTLPWTCMKQGYRHVSLLSRDGTSLNPASIFVYTCMQEDLDMDEP.

A PH domain is found at 16–124 (LLMQEGTMMR…WMRGLQLLVD (109 aa)). Positions 26-53 (KVRTKSWKKLRYFRLQNDGMTVWHGSQP) are substrate binding. 3 EF-hand domains span residues 134-169 (QMDQMLNEWFQQADRNQDGRMSFREAQRLLLLMNVE), 170-205 (MDEEYAFSLFQEADVTQSDDLGSEEFVQFYKALTKR), and 203-237 (TKRTEIEEIFEDFSSDKQKLTLLEFVDFLRKEQKE). Residues Asp147, Asn149, Asp151, Arg153, Glu158, Asp183, Ser187, Asp189, and Glu194 each contribute to the Ca(2+) site. Positions 213 to 243 (EDFSSDKQKLTLLEFVDFLRKEQKEKDHAPD) match the GBA motif. Residues 290–435 (QDMTQPLSHY…LRGKILVKGK (146 aa)) form the PI-PLC X-box domain. Residue His305 is part of the active site. Ca(2+)-binding residues include Asn306, Glu335, and Asp337. Residue His350 is part of the active site. Glu384 is a Ca(2+) binding site. Substrate is bound by residues Lys433 and Lys435. The tract at residues 442–490 (VDKEEEEEEEEEELEKDEGPDLDPASPELDTQPQPETQGQAAGNKKERK) is disordered. Residues 443 to 462 (DKEEEEEEEEEELEKDEGPD) show a composition bias toward acidic residues. Residues 470-482 (LDTQPQPETQGQA) are compositionally biased toward polar residues. In terms of domain architecture, PI-PLC Y-box spans 538–654 (LSALVVYLRT…GYVLKPEFLR (117 aa)). The substrate site is built by Ser567 and Arg594. The C2 domain occupies 654 to 781 (RDTQSSFNPE…QGYRHVSLLS (128 aa)). Ca(2+)-binding residues include Asp697, Asn721, Asp750, and Tyr751. A PDZ-binding motif is present at residues 776–779 (HVSL).

As to quaternary structure, interacts with GRIP1. Interacts (via GBA motif) with guanine nucleotide-binding protein G(i) alpha subunit GNAI3 (inactive GDP-bound form)l low-affinity interaction. The cofactor is Ca(2+).

It is found in the membrane. The protein resides in the nucleus. The protein localises to the cytoplasm. It localises to the endoplasmic reticulum. The enzyme catalyses a 1,2-diacyl-sn-glycero-3-phospho-(1D-myo-inositol-4,5-bisphosphate) + H2O = 1D-myo-inositol 1,4,5-trisphosphate + a 1,2-diacyl-sn-glycerol + H(+). It catalyses the reaction a 1,2-diacyl-sn-glycero-3-phospho-(1D-myo-inositol) + H2O = 1D-myo-inositol 1-phosphate + a 1,2-diacyl-sn-glycerol + H(+). In terms of biological role, hydrolyzes the phosphatidylinositol 4,5-bisphosphate (PIP2) to generate 2 second messenger molecules diacylglycerol (DAG) and inositol 1,4,5-trisphosphate (IP3). DAG mediates the activation of protein kinase C (PKC), while IP3 releases Ca(2+) from intracellular stores. Required for acrosome reaction in sperm during fertilization, probably by acting as an important enzyme for intracellular Ca(2+) mobilization in the zona pellucida-induced acrosome reaction. May play a role in cell growth. Modulates the liver regeneration in cooperation with nuclear PKC. Overexpression up-regulates the Erk signaling pathway and proliferation. This Mus musculus (Mouse) protein is 1-phosphatidylinositol 4,5-bisphosphate phosphodiesterase delta-4.